A 217-amino-acid polypeptide reads, in one-letter code: Thiamine-phosphate synthase (217 aa).

4-amino-2-methyl-5-(diphosphooxymethyl)pyrimidine contacts are provided by residues 37–41 and N72; that span reads QFREK. Mg(2+)-binding residues include D73 and D92. Residue S110 coordinates 4-amino-2-methyl-5-(diphosphooxymethyl)pyrimidine. 136–138 provides a ligand contact to 2-[(2R,5Z)-2-carboxy-4-methylthiazol-5(2H)-ylidene]ethyl phosphate; it reads TVS. K139 is a binding site for 4-amino-2-methyl-5-(diphosphooxymethyl)pyrimidine. 2-[(2R,5Z)-2-carboxy-4-methylthiazol-5(2H)-ylidene]ethyl phosphate-binding positions include G168 and 188 to 189; that span reads IS.

It belongs to the thiamine-phosphate synthase family. The cofactor is Mg(2+).

The catalysed reaction is 2-[(2R,5Z)-2-carboxy-4-methylthiazol-5(2H)-ylidene]ethyl phosphate + 4-amino-2-methyl-5-(diphosphooxymethyl)pyrimidine + 2 H(+) = thiamine phosphate + CO2 + diphosphate. The enzyme catalyses 2-(2-carboxy-4-methylthiazol-5-yl)ethyl phosphate + 4-amino-2-methyl-5-(diphosphooxymethyl)pyrimidine + 2 H(+) = thiamine phosphate + CO2 + diphosphate. It catalyses the reaction 4-methyl-5-(2-phosphooxyethyl)-thiazole + 4-amino-2-methyl-5-(diphosphooxymethyl)pyrimidine + H(+) = thiamine phosphate + diphosphate. It participates in cofactor biosynthesis; thiamine diphosphate biosynthesis; thiamine phosphate from 4-amino-2-methyl-5-diphosphomethylpyrimidine and 4-methyl-5-(2-phosphoethyl)-thiazole: step 1/1. Condenses 4-methyl-5-(beta-hydroxyethyl)thiazole monophosphate (THZ-P) and 2-methyl-4-amino-5-hydroxymethyl pyrimidine pyrophosphate (HMP-PP) to form thiamine monophosphate (TMP). This chain is Thiamine-phosphate synthase, found in Anoxybacillus flavithermus (strain DSM 21510 / WK1).